The sequence spans 262 residues: Sepiapterin reductase (262 aa).

Methionine 1 carries the post-translational modification N-acetylmethionine. Residues 15–21 (GASRGFG) and 43–44 (RS) each bind NADP(+). Serine 46 is modified (phosphoserine). 70-71 (DL) lines the NADP(+) pocket. Residues 158 to 159 (SL) and tyrosine 171 contribute to the substrate site. Residue lysine 175 coordinates NADP(+). At serine 196 the chain carries Phosphoserine. Position 200 (glycine 200) interacts with substrate. An NADP(+)-binding site is contributed by 202–207 (LDTDMQ). The residue at position 214 (serine 214) is a Phosphoserine. Aspartate 258 contributes to the substrate binding site.

The protein belongs to the sepiapterin reductase family. In terms of assembly, homodimer.

It localises to the cytoplasm. It carries out the reaction L-erythro-7,8-dihydrobiopterin + NADP(+) = L-sepiapterin + NADPH + H(+). The catalysed reaction is (6R)-L-erythro-5,6,7,8-tetrahydrobiopterin + 2 NADP(+) = 6-pyruvoyl-5,6,7,8-tetrahydropterin + 2 NADPH + 2 H(+). It catalyses the reaction (S)-benzoin + NADP(+) = benzil + NADPH + H(+). Functionally, catalyzes the final one or two reductions in tetra-hydrobiopterin biosynthesis to form 5,6,7,8-tetrahydrobiopterin. The enzyme also catalyzes the reduction of benzil to (S)-benzoin. The protein is Sepiapterin reductase (SPR) of Meriones unguiculatus (Mongolian jird).